We begin with the raw amino-acid sequence, 488 residues long: Secreted triacylglycerol lipase LIP1 (488 aa).

An N-terminal signal peptide occupies residues 1–26; that stretch reads MPSMLSLFYLAQSLFLLLLFPLYGHA. C119 and C288 form a disulfide bridge. Residue N183 is glycosylated (N-linked (GlcNAc...) asparagine). S201 serves as the catalytic Nucleophile. The N-linked (GlcNAc...) asparagine glycan is linked to N316. Active-site residues include D348 and H382. A disordered region spans residues 461-488; it reads SKSGSSLKSHSHSQTHKHRKDVSTISNA. Over residues 469-480 the composition is skewed to basic residues; the sequence is SHSHSQTHKHRK.

It belongs to the AB hydrolase superfamily. Lipase family. Class Lip subfamily.

Its subcellular location is the secreted. It catalyses the reaction a triacylglycerol + H2O = a diacylglycerol + a fatty acid + H(+). The catalysed reaction is a monoacylglycerol + H2O = glycerol + a fatty acid + H(+). It carries out the reaction a diacylglycerol + H2O = a monoacylglycerol + a fatty acid + H(+). Inhibited by different metal ions including Fe(2+), Fe(3+), Cu(2+), and Zn(2+). The monovalent ions Na(+) and K(+) exhibit less dramatic inhibition. Secreted lipase that releases free fatty acids from monoacylglycerol and triacylglycerol but has no phospholipase or lysophospholipase activities. Has minor esterase activity. Due to an absence of fatty acid synthase genes in Malassezia species, secretory lipases are essential for the yeast to generate free fatty acids from degradation of sebum and assimilate them as lipid sources for growth. Plays important roles not only in lipid metabolism but also in the immune response of host cells and pathogenesis. Hydrolyzes lipids, such as Tween 20, 40 and 80, with Tween 80 being the best substrate. The polypeptide is Secreted triacylglycerol lipase LIP1 (Malassezia furfur (Pityriasis versicolor infection agent)).